The chain runs to 515 residues: Gap junction alpha-9 protein (515 aa).

The Cytoplasmic segment spans residues 1–19; the sequence is MGDWNLLGDTLEEVHIHST. Residues 20–40 form a helical membrane-spanning segment; that stretch reads MIGKIWLTILFIFRMLVLGVA. Residues 41–77 lie on the Extracellular side of the membrane; it reads AEDVWNDEQSGFICNTEQPGCRNVCYDQAFPISLIRY. The chain crosses the membrane as a helical span at residues 78 to 98; it reads WVLQVIFVSSPSLVYMGHALY. At 99 to 166 the chain is on the cytoplasmic side; sequence RLRVLEEERQ…YVIHIFTRSV (68 aa). The helical transmembrane segment at 167–187 threads the bilayer; that stretch reads VEVGFMIGQYLLYGFHLEPLF. Residues 188-209 are Extracellular-facing; sequence KCHGHPCPNIIDCFVSRPTEKT. A helical membrane pass occupies residues 210 to 230; the sequence is IFLLFMQSIATISLFLNILEI. Topologically, residues 231-515 are cytoplasmic; the sequence is FHLGFKKIKR…GRRVPTDLQI (285 aa). The span at 370–380 shows a compositional bias: basic and acidic residues; that stretch reads KRETEGKDSKR. Disordered stretches follow at residues 370-400 and 428-472; these read KRET…GENN and SSTE…NTAD. Residues 456-472 are compositionally biased toward polar residues; it reads PPSQGDSQSLDIPNTAD.

The protein belongs to the connexin family. Alpha-type (group II) subfamily. As to quaternary structure, a connexon is composed of a hexamer of connexins. In terms of tissue distribution, highly abundant in skeletal muscle. Also detected in testis.

It is found in the cell membrane. The protein resides in the cell junction. The protein localises to the gap junction. In terms of biological role, one gap junction consists of a cluster of closely packed pairs of transmembrane channels, the connexons, through which materials of low MW diffuse from one cell to a neighboring cell. This Homo sapiens (Human) protein is Gap junction alpha-9 protein (GJA9).